The primary structure comprises 400 residues: ATP-dependent rRNA helicase RRP3 (400 aa).

Positions 1 to 29 (MEFGDLRIDESLIKTCQEKGITRPTEVQR) match the Q motif motif. Residues 32 to 202 (IPAVLGGGDV…SSILKRPKTI (171 aa)) enclose the Helicase ATP-binding domain. 45–52 (SQTGSGKT) provides a ligand contact to ATP. Residues 150 to 153 (DEAD) carry the DEAD box motif. The Helicase C-terminal domain maps to 229-373 (ALVELLEMSQ…EFKMMKKNFG (145 aa)).

This sequence belongs to the DEAD box helicase family. DDX47/RRP3 subfamily. In terms of assembly, interacts with the SSU processome.

It localises to the nucleus. It catalyses the reaction ATP + H2O = ADP + phosphate + H(+). ATP-dependent rRNA helicase required for pre-ribosomal RNA processing. Involved in the maturation of the 35S-pre-rRNA and to its cleavage to mature 18S rRNA. The chain is ATP-dependent rRNA helicase RRP3 from Encephalitozoon cuniculi (strain GB-M1) (Microsporidian parasite).